A 281-amino-acid polypeptide reads, in one-letter code: 2-dehydro-3-deoxyphosphooctonate aldolase (281 aa).

Belongs to the KdsA family.

Its subcellular location is the cytoplasm. The enzyme catalyses D-arabinose 5-phosphate + phosphoenolpyruvate + H2O = 3-deoxy-alpha-D-manno-2-octulosonate-8-phosphate + phosphate. It functions in the pathway carbohydrate biosynthesis; 3-deoxy-D-manno-octulosonate biosynthesis; 3-deoxy-D-manno-octulosonate from D-ribulose 5-phosphate: step 2/3. The protein operates within bacterial outer membrane biogenesis; lipopolysaccharide biosynthesis. This chain is 2-dehydro-3-deoxyphosphooctonate aldolase, found in Pseudomonas fluorescens (strain SBW25).